A 621-amino-acid polypeptide reads, in one-letter code: DnaJ homolog subfamily C member 2 (621 aa).

Position 1 is an N-acetylmethionine (Met-1). The segment at 23–31 is epitope (recognized by CD8(+) cytotoxic T-lymphocytes); it reads STLCQVEPV. Phosphoserine occurs at positions 47, 49, 60, and 63. In terms of domain architecture, J spans 88–161; it reads DHYAVLGLGH…VKRRAFNSVD (74 aa). A ZRF1-UBD region spans residues 160 to 250; it reads VDPTFDNSVP…RDERRWIEKQ (91 aa). Disordered regions lie at residues 294–315 and 426–453; these read EKKA…QRQA and KEEA…GSKN. SANT domains lie at 449–511 and 549–604; these read NGSK…KLDP and TDFT…EMVK.

In terms of assembly, component of ribosome-associated complex (RAC), a heterodimer composed of Hsp70/DnaK-type chaperone HSPA14 and Hsp40/DnaJ-type chaperone DNAJC2. Interacts (via ZRF1-UBD region) with ID1. In terms of processing, phosphorylated in M (mitotic) phase. In terms of tissue distribution, widely expressed.

It localises to the nucleus. The protein localises to the cytoplasm. It is found in the cytosol. Functionally, acts both as a chaperone in the cytosol and as a chromatin regulator in the nucleus. When cytosolic, acts as a molecular chaperone: component of the ribosome-associated complex (RAC), a complex involved in folding or maintaining nascent polypeptides in a folding-competent state. In the RAC complex, stimulates the ATPase activity of the ribosome-associated pool of Hsp70-type chaperones HSPA14 that bind to the nascent polypeptide chain. When nuclear, mediates the switching from polycomb-repressed genes to an active state: specifically recruited at histone H2A ubiquitinated at 'Lys-119' (H2AK119ub), and promotes the displacement of the polycomb PRC1 complex from chromatin, thereby facilitating transcription activation. The chain is DnaJ homolog subfamily C member 2 (DNAJC2) from Homo sapiens (Human).